A 44-amino-acid polypeptide reads, in one-letter code: uncharacterized protein (44 aa).

Residues 6-26 (SILIRGGGGVLIVLILLLWIV) traverse the membrane as a helical segment.

Its subcellular location is the membrane. This is an uncharacterized protein from Ornithodoros (relapsing fever ticks).